A 141-amino-acid polypeptide reads, in one-letter code: Phage-like element PBSX protein XkdS (141 aa).

It to B.subtilis YqbS.

The polypeptide is Phage-like element PBSX protein XkdS (xkdS) (Bacillus subtilis (strain 168)).